A 139-amino-acid polypeptide reads, in one-letter code: 3-hydroxyacyl-[acyl-carrier-protein] dehydratase FabZ (139 aa).

H47 is an active-site residue.

This sequence belongs to the thioester dehydratase family. FabZ subfamily.

The protein resides in the cytoplasm. The enzyme catalyses a (3R)-hydroxyacyl-[ACP] = a (2E)-enoyl-[ACP] + H2O. Involved in unsaturated fatty acids biosynthesis. Catalyzes the dehydration of short chain beta-hydroxyacyl-ACPs and long chain saturated and unsaturated beta-hydroxyacyl-ACPs. The protein is 3-hydroxyacyl-[acyl-carrier-protein] dehydratase FabZ of Clostridium perfringens (strain ATCC 13124 / DSM 756 / JCM 1290 / NCIMB 6125 / NCTC 8237 / Type A).